A 147-amino-acid polypeptide reads, in one-letter code: D(1B) dopamine receptor (147 aa).

The chain crosses the membrane as a helical span at residues 1 to 12 (SILISFPVQLNW). The Extracellular portion of the chain corresponds to 13–55 (HRDQAGSWGGLDLTNNLANWTPWEEDVWEPDVRAENCDSSLNR). N-linked (GlcNAc...) asparagine glycosylation is present at asparagine 54. A helical transmembrane segment spans residues 56 to 78 (TYAISSSLVSFYIPVAIMIVTYT). Residues 79 to 128 (RIYRIAQVQIRRISSLERAAEHAQSCRSSAACAPDTSLRASIKKETKVLK) lie on the Cytoplasmic side of the membrane. Residues 129-147 (TLSVIMGVFVCCWLPFFIL) form a helical membrane-spanning segment.

This sequence belongs to the G-protein coupled receptor 1 family.

It localises to the cell membrane. Its function is as follows. Dopamine receptor whose activity is mediated by G proteins which activate adenylyl cyclase. The protein is D(1B) dopamine receptor (DRD5) of Macaca mulatta (Rhesus macaque).